Consider the following 37-residue polypeptide: Large ribosomal subunit protein bL36 (37 aa).

It belongs to the bacterial ribosomal protein bL36 family.

In Desulfitobacterium hafniense (strain Y51), this protein is Large ribosomal subunit protein bL36.